The chain runs to 788 residues: 5-methyltetrahydropteroyltriglutamate--homocysteine methyltransferase (788 aa).

5-methyltetrahydropteroyltri-L-glutamate is bound by residues 24-27 (RELK) and K140. Residues 463 to 465 (IGS) and E516 each bind L-homocysteine. L-methionine is bound by residues 463–465 (IGS) and E516. 5-methyltetrahydropteroyltri-L-glutamate is bound by residues 547–548 (RC) and W593. Position 631 (D631) interacts with L-homocysteine. Residue D631 participates in L-methionine binding. E637 lines the 5-methyltetrahydropteroyltri-L-glutamate pocket. H673, C675, and E697 together coordinate Zn(2+). H726 (proton donor) is an active-site residue. Position 758 (C758) interacts with Zn(2+).

The protein belongs to the vitamin-B12 independent methionine synthase family. The cofactor is Zn(2+).

The enzyme catalyses 5-methyltetrahydropteroyltri-L-glutamate + L-homocysteine = tetrahydropteroyltri-L-glutamate + L-methionine. It participates in amino-acid biosynthesis; L-methionine biosynthesis via de novo pathway; L-methionine from L-homocysteine (MetE route): step 1/1. Functionally, catalyzes the transfer of a methyl group from 5-methyltetrahydrofolate to homocysteine resulting in methionine formation. The chain is 5-methyltetrahydropteroyltriglutamate--homocysteine methyltransferase from Rhodopseudomonas palustris (strain TIE-1).